Here is a 205-residue protein sequence, read N- to C-terminus: MFLRHCITFTMIALLAGCAGFGSREALQGHGDPQQWRAHKAQLSSLDGWQINGKVGIRAPRDSGSGTLFWLQRQDYYDIRLAGPLGRGAARLTGRPGGVVLEVANQGRYEATSPEALLEEQLGWQLPVSHLVWWVRGLPAPDSKSKLTLDGDSRLASLDQDGWQVQYLSYTEQNGYWLPERLKLHGKDLDVTLVVKDWQPRQLGH.

The N-terminal stretch at 1 to 17 (MFLRHCITFTMIALLAG) is a signal peptide. Cys18 is lipidated: N-palmitoyl cysteine. Cys18 carries the S-diacylglycerol cysteine lipid modification.

This sequence belongs to the LolB family. As to quaternary structure, monomer.

It is found in the cell outer membrane. Its function is as follows. Plays a critical role in the incorporation of lipoproteins in the outer membrane after they are released by the LolA protein. The sequence is that of Outer-membrane lipoprotein LolB from Pseudomonas putida (strain ATCC 700007 / DSM 6899 / JCM 31910 / BCRC 17059 / LMG 24140 / F1).